The following is a 522-amino-acid chain: Maturase K (522 aa).

This sequence belongs to the intron maturase 2 family. MatK subfamily.

It is found in the plastid. Its subcellular location is the chloroplast. Its function is as follows. Usually encoded in the trnK tRNA gene intron. Probably assists in splicing its own and other chloroplast group II introns. The polypeptide is Maturase K (Aristea glauca).